The sequence spans 720 residues: Glycine--tRNA ligase beta subunit (720 aa).

Belongs to the class-II aminoacyl-tRNA synthetase family. As to quaternary structure, tetramer of two alpha and two beta subunits.

It is found in the cytoplasm. It catalyses the reaction tRNA(Gly) + glycine + ATP = glycyl-tRNA(Gly) + AMP + diphosphate. This chain is Glycine--tRNA ligase beta subunit, found in Acidovorax ebreus (strain TPSY) (Diaphorobacter sp. (strain TPSY)).